Reading from the N-terminus, the 67-residue chain is Bowman-Birk type proteinase inhibitor A4 (67 aa).

4 disulfide bridges follow: Cys10–Cys29, Cys16–Cys27, Cys36–Cys43, and Cys40–Cys57.

It belongs to the Bowman-Birk serine protease inhibitor family. In terms of tissue distribution, expressed in bulb (at protein level).

In terms of biological role, serine protease inhibitor. Inhibits trypsin (Ki=12nM) and weakly inhibits chymotrypsin with (Ki=460nm). Does not inhibit bacterial subtilisin. In Hyacinthus orientalis (Common hyacinth), this protein is Bowman-Birk type proteinase inhibitor A4.